We begin with the raw amino-acid sequence, 546 residues long: 3-(3-hydroxy-phenyl)propionate/3-hydroxycinnamic acid hydroxylase 2 (546 aa).

FAD contacts are provided by residues 10-39 (SVAIVGAGPNGAALANLLGLYGVDTVVVER) and 278-288 (FVAGRIALVGD).

The protein belongs to the PheA/TfdB FAD monooxygenase family. Requires FAD as cofactor.

It catalyses the reaction 3-(3-hydroxyphenyl)propanoate + NADH + O2 + H(+) = 3-(2,3-dihydroxyphenyl)propanoate + NAD(+) + H2O. It carries out the reaction (2E)-3-(3-hydroxyphenyl)prop-2-enoate + NADH + O2 + H(+) = (2E)-3-(2,3-dihydroxyphenyl)prop-2-enoate + NAD(+) + H2O. It functions in the pathway aromatic compound metabolism; 3-phenylpropanoate degradation. Its function is as follows. Catalyzes the insertion of one atom of molecular oxygen into position 2 of the phenyl ring of 3-(3-hydroxyphenyl)propionate (3-HPP) and hydroxycinnamic acid (3HCI). The protein is 3-(3-hydroxy-phenyl)propionate/3-hydroxycinnamic acid hydroxylase 2 of Burkholderia vietnamiensis (strain G4 / LMG 22486) (Burkholderia cepacia (strain R1808)).